The following is a 20-amino-acid chain: Thylakoid lumenal 20 kDa protein (20 aa).

Residues 1 to 20 (RDVDVGSFLPKSPSDPSMVL) are disordered.

The protein resides in the plastid. The protein localises to the chloroplast thylakoid lumen. The sequence is that of Thylakoid lumenal 20 kDa protein from Spinacia oleracea (Spinach).